A 1376-amino-acid chain; its full sequence is Zinc finger MYM-type protein 2 (1376 aa).

Polar residues predominate over residues 30 to 53; that stretch reads NVGNSFSGPPNPLVSRSSKFQNSS. 2 disordered regions span residues 30-56 and 85-158; these read NVGN…SVED and TSSK…FSSS. Glycyl lysine isopeptide (Lys-Gly) (interchain with G-Cter in SUMO2) cross-links involve residues lysine 48, lysine 88, lysine 98, and lysine 104. Residues 127–138 show a composition bias toward polar residues; the sequence is TNQGQEKSSSNF. Positions 139–152 are enriched in basic and acidic residues; sequence IERRPSETKNRTND. Residues lysine 147, lysine 253, and lysine 297 each participate in a glycyl lysine isopeptide (Lys-Gly) (interchain with G-Cter in SUMO2) cross-link. The interval 269–304 is disordered; it reads DVFQNGESAPHHNPDSWISQSASFPRNQKQQGVDSL. Positions 284 to 302 are enriched in polar residues; sequence SWISQSASFPRNQKQQGVD. At serine 305 the chain carries Phosphoserine. Residues lysine 312, lysine 324, lysine 347, and lysine 365 each participate in a glycyl lysine isopeptide (Lys-Gly) (interchain with G-Cter in SUMO2) cross-link. Residues 326–362 form an MYM-type 1 zinc finger; the sequence is VKVTCANCKKPLQKGQTAYQRKGSAHLFCSTTCLSSF. The MYM-type 2 zinc-finger motif lies at 368–408; the sequence is PKKLCVMCKKDITTMKGTIVAQVDSSESFQEFCSTSCLSLY. Glycyl lysine isopeptide (Lys-Gly) (interchain with G-Cter in SUMO2) cross-links involve residues lysine 416, lysine 440, lysine 490, lysine 502, lysine 512, lysine 528, and lysine 531. 2 MYM-type zinc fingers span residues 420–455 and 462–501; these read NKSR…FNRY and IMNC…VTEY. The segment at 532-569 adopts an MYM-type 5 zinc-finger fold; the sequence is LTTCTGCRTQCRFFDMTQCIGPNGYMEPYCSTACMNSH. Glycyl lysine isopeptide (Lys-Gly) (interchain with G-Cter in SUMO2) cross-links involve residues lysine 575, lysine 602, lysine 648, lysine 657, lysine 687, lysine 699, and lysine 708. The MYM-type 6 zinc-finger motif lies at 635 to 670; the sequence is QLKCNYCKNSFCSKPEILEWENKVHQFCSKTCSDDY. MYM-type zinc fingers lie at residues 722-757 and 763-798; these read RCVT…CKKF and KAAR…LLRF. Residues lysine 763, lysine 787, lysine 811, and lysine 828 each participate in a glycyl lysine isopeptide (Lys-Gly) (interchain with G-Cter in SUMO2) cross-link. Serine 837 carries the post-translational modification Phosphoserine. The interval 1027-1063 is disordered; sequence VFGEEYEEQPRPRSKKKGTKRKAVSGYQSHDDSSDNS. The span at 1038–1049 shows a compositional bias: basic residues; that stretch reads PRSKKKGTKRKA. At serine 1063 the chain carries Phosphoserine. Threonine 1375 carries the post-translational modification Phosphothreonine.

Can form homodimers. May be a component of a BHC histone deacetylase complex that contains HDAC1, HDAC2, HMG20B/BRAF35, KDM1A, RCOR1/CoREST, PHF21A/BHC80, ZMYM2, ZNF217, ZMYM3, GSE1 and GTF2I. Interacts with FOXP1 and FOXP2. Low but widespread expression is detected in the developing kidney.

It localises to the nucleus. Functionally, involved in the negative regulation of transcription. The chain is Zinc finger MYM-type protein 2 (Zmym2) from Mus musculus (Mouse).